A 269-amino-acid polypeptide reads, in one-letter code: GTP cyclohydrolase FolE2 (269 aa).

This sequence belongs to the GTP cyclohydrolase IV family.

The enzyme catalyses GTP + H2O = 7,8-dihydroneopterin 3'-triphosphate + formate + H(+). Its pathway is cofactor biosynthesis; 7,8-dihydroneopterin triphosphate biosynthesis; 7,8-dihydroneopterin triphosphate from GTP: step 1/1. In terms of biological role, converts GTP to 7,8-dihydroneopterin triphosphate. The sequence is that of GTP cyclohydrolase FolE2 from Burkholderia multivorans (strain ATCC 17616 / 249).